A 308-amino-acid chain; its full sequence is PAK4-inhibitor inka1 (308 aa).

The segment at 81-105 is disordered; it reads EEEESASDPSAVSSPSSERSLEFDS. A compositionally biased stretch (low complexity) spans 87 to 98; the sequence is SDPSAVSSPSSE. Inka box regions lie at residues 164 to 201 and 281 to 308; these read DPED…DLPE and DTDY…IGYI.

The protein belongs to the INKA family. In terms of assembly, interacts with pak4/pak5.

It localises to the nucleus. The protein localises to the cytoplasm. Inhibitor of the serine/threonine-protein kinase pak4/pak5. Acts by binding pak4/pak5 in a substrate-like manner, inhibiting the protein kinase activity. Required for the proper migration of neural crest cells during embryonic development, probably by inhibiting pak4/pak5. This is PAK4-inhibitor inka1 from Danio rerio (Zebrafish).